The sequence spans 130 residues: Small ribosomal subunit protein uS11 (130 aa).

This sequence belongs to the universal ribosomal protein uS11 family. In terms of assembly, part of the 30S ribosomal subunit. Interacts with proteins S7 and S18. Binds to IF-3.

Its function is as follows. Located on the platform of the 30S subunit, it bridges several disparate RNA helices of the 16S rRNA. Forms part of the Shine-Dalgarno cleft in the 70S ribosome. This is Small ribosomal subunit protein uS11 from Blochmanniella floridana.